We begin with the raw amino-acid sequence, 270 residues long: Alpha N-terminal protein methyltransferase 1 (270 aa).

S-adenosyl-L-methionine contacts are provided by residues Gly-114, Arg-119, 137–139, 165–166, and Gln-180; these read EQN and LQ.

Belongs to the methyltransferase superfamily. NTM1 family.

The catalysed reaction is N-terminal L-alanyl-L-prolyl-L-lysyl-[protein] + 3 S-adenosyl-L-methionine = N-terminal N,N,N-trimethyl-L-alanyl-L-prolyl-L-lysyl-[protein] + 3 S-adenosyl-L-homocysteine + 3 H(+). It carries out the reaction N-terminal L-seryl-L-prolyl-L-lysyl-[protein] + 3 S-adenosyl-L-methionine = N-terminal N,N,N-trimethyl-L-seryl-L-prolyl-L-lysyl-[protein] + 3 S-adenosyl-L-homocysteine + 3 H(+). It catalyses the reaction N-terminal L-prolyl-L-prolyl-L-lysyl-[protein] + 2 S-adenosyl-L-methionine = N-terminal N,N-dimethyl-L-prolyl-L-prolyl-L-lysyl-[protein] + 2 S-adenosyl-L-homocysteine + 2 H(+). Functionally, alpha-N-methyltransferase that methylates the N-terminus of target proteins containing the N-terminal motif [Ala/Pro/Ser]-Pro-Lys when the initiator Met is cleaved. Specifically catalyzes mono-, di- or tri-methylation of exposed alpha-amino group of Ala or Ser residue in the [Ala/Ser]-Pro-Lys motif and mono- or di-methylation of Pro in the Pro-Pro-Lys motif. This Dictyostelium discoideum (Social amoeba) protein is Alpha N-terminal protein methyltransferase 1.